The primary structure comprises 333 residues: Testin-2 (333 aa).

A signal peptide spans Met-1 to Thr-17. Cystine bridges form between Cys-135/Cys-178, Cys-169/Cys-211, and Cys-269/Cys-322. The N-linked (GlcNAc...) asparagine glycan is linked to Asn-173. Active-site residues include His-276 and Asn-300.

The protein belongs to the peptidase C1 family. Sertoli cells.

It localises to the secreted. This chain is Testin-2 (Testin), found in Rattus norvegicus (Rat).